Here is an 83-residue protein sequence, read N- to C-terminus: Hainantoxin-III 5 (83 aa).

The first 21 residues, Met-1–Ala-21, serve as a signal peptide directing secretion. Positions Ser-22 to Arg-48 are excised as a propeptide. Cystine bridges form between Cys-50–Cys-65, Cys-57–Cys-70, and Cys-64–Cys-77. The residue at position 81 (Leu-81) is a Leucine amide.

Belongs to the neurotoxin 10 (Hwtx-1) family. 15 (Hntx-3) subfamily. Monomer. Expressed by the venom gland.

The protein resides in the secreted. Functionally, selective antagonist of neuronal tetrodotoxin (TTX)-sensitive voltage-gated sodium channels (IC(50)=1270 nM on Nav1.1/SCN1A, 270 nM on Nav1.2/SCN2A, 491 nM on Nav1.3/SCN3A and 232 nM on Nav1.7/SCN9A). This toxin suppress Nav1.7 current amplitude without significantly altering the activation, inactivation, and repriming kinetics. Short extreme depolarizations partially activate the toxin-bound channel, indicating voltage-dependent inhibition of this toxin. This toxin increases the deactivation of the Nav1.7 current after extreme depolarizations. The toxin-Nav1.7 complex is gradually dissociated upon prolonged strong depolarizations in a voltage-dependent manner, and the unbound toxin rebinds to Nav1.7 after a long repolarization. Moreover, analysis of chimeric channels showed that the DIIS3-S4 linker is critical for toxin binding to Nav1.7. These data are consistent with this toxin interacting with Nav1.7 site 4 and trapping the domain II voltage sensor in the closed state. The chain is Hainantoxin-III 5 from Cyriopagopus hainanus (Chinese bird spider).